The primary structure comprises 159 residues: Ribosomal RNA large subunit methyltransferase H (159 aa).

S-adenosyl-L-methionine is bound by residues Leu-76, Gly-108, and 127-132 (FGRLTY).

It belongs to the RNA methyltransferase RlmH family. Homodimer.

It localises to the cytoplasm. It catalyses the reaction pseudouridine(1915) in 23S rRNA + S-adenosyl-L-methionine = N(3)-methylpseudouridine(1915) in 23S rRNA + S-adenosyl-L-homocysteine + H(+). Functionally, specifically methylates the pseudouridine at position 1915 (m3Psi1915) in 23S rRNA. This Enterococcus faecalis (strain ATCC 700802 / V583) protein is Ribosomal RNA large subunit methyltransferase H.